A 376-amino-acid chain; its full sequence is MASHAGQQHAPAFGQAARASGPTDGRAASRPSHRQGASEARGDPELPTLLRVYIDGPHGVGKTTTSAQLMEALGPRDNIVYVPEPMTYWQVLGASETLTNIYNTQHRLDRGEISAGEAAVVMTSAQITMSTPYAATDAVLAPHIGGEAVGPQAPPPALTLVFDRHPIASLLCYPAARYLMGSMTPQAVLAFVALMPPTAPGTNLVLGVLPEAEHADRLARRQRPGERLDLAMLSAIRRVYDLLANTVRYLQRGGRWREDWGRLTGVAAATPRPDPEDGAGSLPRIEDTLFALFRVPELLAPNGDLYHIFAWVLDVLADRLLPMHLFVLDYDQSPVGCRDALLRLTAGMIPTRVTTAGSIAEIRDLARTFAREVGGV.

Positions M1–P47 are disordered. G56–T63 contributes to the ATP binding site. Residue E84 is the Proton acceptor of the active site. The substrate site is built by Y102 and Q126. R217 contacts ATP. R223 provides a ligand contact to substrate.

Belongs to the herpesviridae thymidine kinase family. In terms of assembly, homodimer.

It catalyses the reaction thymidine + ATP = dTMP + ADP + H(+). Catalyzes the transfer of the gamma-phospho group of ATP to thymidine to generate dTMP in the salvage pathway of pyrimidine synthesis. The dTMP serves as a substrate for DNA polymerase during viral DNA replication. Allows the virus to be reactivated and to grow in non-proliferative cells lacking a high concentration of phosphorylated nucleic acid precursors. The chain is Thymidine kinase from Human herpesvirus 2 (strain 333) (HHV-2).